The following is a 645-amino-acid chain: Translation factor GUF1 homolog, mitochondrial (645 aa).

The region spanning 40 to 215 (DKIRNFGIVA…AIIDRVPAPT (176 aa)) is the tr-type G domain. GTP contacts are provided by residues 49–56 (AHVDHGKS), 108–112 (DTPGH), and 162–165 (NKID).

It belongs to the TRAFAC class translation factor GTPase superfamily. Classic translation factor GTPase family. LepA subfamily.

The protein resides in the mitochondrion inner membrane. It carries out the reaction GTP + H2O = GDP + phosphate + H(+). In terms of biological role, promotes mitochondrial protein synthesis. May act as a fidelity factor of the translation reaction, by catalyzing a one-codon backward translocation of tRNAs on improperly translocated ribosomes. Binds to mitochondrial ribosomes in a GTP-dependent manner. This is Translation factor GUF1 homolog, mitochondrial from Caenorhabditis elegans.